The sequence spans 670 residues: MHHQQRMAALGTDKELSDLLDFSAMFSPPVSSGKNGPTSLASGHFTGSNVEDRSSSGSWGTGGHPSPSRNYGDGTPYDHMTSRDLGSHDNLSPPFVNSRIQSKTERGSYSSYGRENVQGCHQQSLLGGDMDMGNPGTLSPTKPGSQYYQYSSNNARRRPLHSSAMEVQTKKVRKVPPGLPSSVYAPSASTADYNRDSPGYPSSKPAASTFPSSFFMQDGHHSSDPWSSSSGMNQPGYGGMLGNSSHIPQSSSYCSLHPHERLSYPSHSSADINSSLPPMSTFHRSGTNHYSTSSCTPPANGTDSIMANRGTGAAGSSQTGDALGKALASIYSPDHTNNSFSSNPSTPVGSPPSLSAGTAVWSRNGGQASSSPNYEGPLHSLQSRIEDRLERLDDAIHVLRNHAVGPSTAVPGGHGDMHGIMGPSHNGAMGSLGSGYGTSLLSANRHSLMVGAHREDGVALRGSHSLLPNQVPVPQLPVQSATSPDLNPPQDPYRGMPPGLQGQSVSSGSSEIKSDDEGDENLQDTKSSEDKKLDDDKKDIKSITRSRSSNNDDEDLTPEQKAEREKERRMANNARERLRVRDINEAFKELGRMVQLHLKSDKPQTKLLILHQAVAVILSLEQQVRERNLNPKAACLKRREEEKVSSEPPPLSLAGPHPGMGDAANHMGQM.

The tract at residues Met-1 to Arg-83 is essential for MYOD1 inhibition. Disordered stretches follow at residues Ala-24–Ser-244, Leu-262–Gly-320, His-335–Leu-378, Pro-406–Asn-426, Ser-465–Asn-573, and Lys-637–Met-670. Positions Pro-29–Asn-49 are enriched in polar residues. 3 positions are modified to phosphoserine: Ser-66, Ser-87, and Ser-92. Polar residues-rich tracts occupy residues Gly-107–Leu-125, Gly-136–Asn-154, Pro-205–Phe-215, and Pro-265–Ile-305. Low complexity predominate over residues Thr-336–Pro-347. Polar residues predominate over residues Asn-364–Asn-373. Position 371 is a phosphoserine (Ser-371). The interval Leu-378–Leu-399 is leucine-zipper. Composition is skewed to low complexity over residues Leu-466–Gln-479 and Gly-502–Glu-511. Ser-514 bears the Phosphoserine mark. Basic and acidic residues-rich tracts occupy residues Lys-526–Ser-542 and Pro-558–Asn-573. A bHLH domain is found at Glu-567–Leu-620. The interval Gln-622–Ser-645 is class A specific domain.

Efficient DNA binding requires dimerization with another bHLH protein. Isoform 2 seems to form inactive heterodimers with MYOD1. Interacts with HIVEP2. Interacts with NEUROD2. Interacts with AGBL1. Interacts with BHLHA9. In terms of tissue distribution, expressed in the cerebral cortex, Purkinje and granule cell layers of the cerebellum, olfactory neuroepithelium, pyramidal cells of hippocampal layers CA1-CA4, and in the granular cells of the dentate gyrus.

The protein resides in the nucleus. Its function is as follows. Transcription factor that binds to the immunoglobulin enhancer Mu-E5/KE5-motif. Involved in the initiation of neuronal differentiation. Activates transcription by binding to the E box (5'-CANNTG-3'). Isoform 2 inhibits MYOD1 activation of the cardiac alpha-actin promoter. Binds to the E-box present in the somatostatin receptor 2 initiator element (SSTR2-INR) to activate transcription. May have a regulatory function in developmental processes as well as during neuronal plasticity. The protein is Transcription factor 4 (Tcf4) of Mus musculus (Mouse).